The sequence spans 441 residues: GTPase Der (441 aa).

EngA-type G domains are found at residues 4-169 (PVVA…PEDI) and 178-353 (IKVA…DQAA). Residues 10-17 (GRPNVGKS), 57-61 (DTGGI), 120-123 (NKVD), 184-191 (GKPNAGKS), 231-235 (DTAGI), and 296-299 (NKWD) contribute to the GTP site. The 85-residue stretch at 354 to 438 (FRISTGMLND…PIRFIHRQRE (85 aa)) folds into the KH-like domain.

Belongs to the TRAFAC class TrmE-Era-EngA-EngB-Septin-like GTPase superfamily. EngA (Der) GTPase family. Associates with the 50S ribosomal subunit.

GTPase that plays an essential role in the late steps of ribosome biogenesis. This Ruminiclostridium cellulolyticum (strain ATCC 35319 / DSM 5812 / JCM 6584 / H10) (Clostridium cellulolyticum) protein is GTPase Der.